The primary structure comprises 333 residues: Holliday junction branch migration complex subunit RuvB (333 aa).

Residues 1 to 182 form a large ATPase domain (RuvB-L) region; that stretch reads MDERLLSGES…FGVLSRLEYY (182 aa). ATP-binding positions include L21, R22, G63, K66, T67, T68, 129 to 131, R172, Y182, and R219; that span reads EDF. A Mg(2+)-binding site is contributed by T67. Residues 183–253 are small ATPAse domain (RuvB-S); sequence TVDQLSEIVE…ITQMALELLQ (71 aa). Positions 256 to 333 are head domain (RuvB-H); the sequence is KLGLDHIDHK…EHFGMEMPKV (78 aa). The DNA site is built by R311 and R316.

Belongs to the RuvB family. As to quaternary structure, homohexamer. Forms an RuvA(8)-RuvB(12)-Holliday junction (HJ) complex. HJ DNA is sandwiched between 2 RuvA tetramers; dsDNA enters through RuvA and exits via RuvB. An RuvB hexamer assembles on each DNA strand where it exits the tetramer. Each RuvB hexamer is contacted by two RuvA subunits (via domain III) on 2 adjacent RuvB subunits; this complex drives branch migration. In the full resolvosome a probable DNA-RuvA(4)-RuvB(12)-RuvC(2) complex forms which resolves the HJ.

The protein resides in the cytoplasm. It carries out the reaction ATP + H2O = ADP + phosphate + H(+). Its function is as follows. The RuvA-RuvB-RuvC complex processes Holliday junction (HJ) DNA during genetic recombination and DNA repair, while the RuvA-RuvB complex plays an important role in the rescue of blocked DNA replication forks via replication fork reversal (RFR). RuvA specifically binds to HJ cruciform DNA, conferring on it an open structure. The RuvB hexamer acts as an ATP-dependent pump, pulling dsDNA into and through the RuvAB complex. RuvB forms 2 homohexamers on either side of HJ DNA bound by 1 or 2 RuvA tetramers; 4 subunits per hexamer contact DNA at a time. Coordinated motions by a converter formed by DNA-disengaged RuvB subunits stimulates ATP hydrolysis and nucleotide exchange. Immobilization of the converter enables RuvB to convert the ATP-contained energy into a lever motion, pulling 2 nucleotides of DNA out of the RuvA tetramer per ATP hydrolyzed, thus driving DNA branch migration. The RuvB motors rotate together with the DNA substrate, which together with the progressing nucleotide cycle form the mechanistic basis for DNA recombination by continuous HJ branch migration. Branch migration allows RuvC to scan DNA until it finds its consensus sequence, where it cleaves and resolves cruciform DNA. In Bacillus cereus (strain ATCC 10987 / NRS 248), this protein is Holliday junction branch migration complex subunit RuvB.